A 182-amino-acid chain; its full sequence is Dual-action ribosomal maturation protein DarP (182 aa).

It belongs to the DarP family.

The protein resides in the cytoplasm. Member of a network of 50S ribosomal subunit biogenesis factors which assembles along the 30S-50S interface, preventing incorrect 23S rRNA structures from forming. Promotes peptidyl transferase center (PTC) maturation. This is Dual-action ribosomal maturation protein DarP from Yersinia pseudotuberculosis serotype O:1b (strain IP 31758).